The following is a 571-amino-acid chain: DM7 family protein CG15332 (571 aa).

The tract at residues 440 to 472 (TRDDGINTADYQSQFPELEPEPEPEPEDEGEDV) is disordered. Over residues 457-471 (LEPEPEPEPEDEGED) the composition is skewed to acidic residues.

Belongs to the DM7 family.

The polypeptide is DM7 family protein CG15332 (Drosophila melanogaster (Fruit fly)).